The primary structure comprises 198 residues: ATP-dependent Clp protease proteolytic subunit (198 aa).

S98 serves as the catalytic Nucleophile. The active site involves H123.

The protein belongs to the peptidase S14 family. In terms of assembly, fourteen ClpP subunits assemble into 2 heptameric rings which stack back to back to give a disk-like structure with a central cavity, resembling the structure of eukaryotic proteasomes.

It is found in the cytoplasm. It carries out the reaction Hydrolysis of proteins to small peptides in the presence of ATP and magnesium. alpha-casein is the usual test substrate. In the absence of ATP, only oligopeptides shorter than five residues are hydrolyzed (such as succinyl-Leu-Tyr-|-NHMec, and Leu-Tyr-Leu-|-Tyr-Trp, in which cleavage of the -Tyr-|-Leu- and -Tyr-|-Trp bonds also occurs).. Cleaves peptides in various proteins in a process that requires ATP hydrolysis. Has a chymotrypsin-like activity. Plays a major role in the degradation of misfolded proteins. The protein is ATP-dependent Clp protease proteolytic subunit of Ehrlichia ruminantium (strain Welgevonden).